The chain runs to 264 residues: Somatomedin-B and thrombospondin type-1 domain-containing protein (264 aa).

The first 20 residues, 1 to 20 (MRTLWMALCALSRLWPGAQA), serve as a signal peptide directing secretion. One can recognise an SMB domain in the interval 24 to 75 (EAGRCCPGRDPACFARGWRLDRVYGTCFCDQACRFTGDCCFDYDRACPARPC). 7 cysteine pairs are disulfide-bonded: Cys28–Cys36, Cys28–Cys52, Cys36–Cys70, Cys50–Cys52, Cys50–Cys63, Cys56–Cys62, and Cys63–Cys70. In terms of domain architecture, TSP type-1 spans 74–127 (PCFVGEWSPWSGCADQCKPTTRVRRRSVQQEPQNGGAPCPPLEERAGCLEYSTP). N-linked (GlcNAc...) asparagine glycosylation occurs at Asn227.

Belongs to the thrombospondin family. As to expression, detected in aorta extracellular matrix (at protein level).

The protein resides in the secreted. It localises to the extracellular space. The protein localises to the extracellular matrix. The polypeptide is Somatomedin-B and thrombospondin type-1 domain-containing protein (SBSPON) (Homo sapiens (Human)).